Here is an 832-residue protein sequence, read N- to C-terminus: WD repeat-containing protein 75 (832 aa).

WD repeat units lie at residues 4–43 (KTDI…KVYS), 47–86 (EEWL…KLWD), 90–134 (GILI…QLVA), 148–187 (KELS…YFFR), 196–233 (LKAT…RLWR), 239–278 (KEYT…VQWQ), 281–320 (DMSK…SIIE), 326–364 (SGLI…QFYS), 378–425 (QQEY…KLWA), 432–474 (SFVL…KAWC), 485–523 (YWSC…TLWS), 527–567 (WELL…CCWN), and 572–609 (ALEW…FVFK). Disordered stretches follow at residues 704–723 (QHKL…HTQG) and 759–811 (VREE…AQER). The span at 764–785 (DSSEQEMDSEKEEEESEEEMEA) shows a compositional bias: acidic residues. Residues 799–811 (DEQKPKLSKAQER) are compositionally biased toward basic and acidic residues.

In terms of assembly, component of the proposed t-UTP subcomplex of the ribosomal small subunit (SSU) processome. SSU processome is composed of more than 70 proteins and the RNA chaperone small nucleolar RNA (snoRNA) U3.

Its subcellular location is the nucleus. The protein resides in the nucleolus. Its function is as follows. Ribosome biogenesis factor. Part of the small subunit (SSU) processome, first precursor of the small eukaryotic ribosomal subunit. During the assembly of the SSU processome in the nucleolus, many ribosome biogenesis factors, an RNA chaperone and ribosomal proteins associate with the nascent pre-rRNA and work in concert to generate RNA folding, modifications, rearrangements and cleavage as well as targeted degradation of pre-ribosomal RNA by the RNA exosome. Involved in nucleolar processing of pre-18S ribosomal RNA. Required for optimal pre-ribosomal RNA transcription by RNA polymerase I. This is WD repeat-containing protein 75 (wdr75) from Danio rerio (Zebrafish).